We begin with the raw amino-acid sequence, 374 residues long: Guanine nucleotide-binding protein subunit alpha-15 (374 aa).

Residues Gly41 to Leu374 form the G-alpha domain. Residues Lys44–Thr57 are G1 motif. GTP is bound by residues Gly49 to Ser56, Leu183 to Thr189, Asp208 to Gln212, Asn277 to Asp280, and Ala346. Mg(2+) is bound at residue Ser56. Residues Asp181 to Thr189 are G2 motif. Arg186 carries the post-translational modification ADP-ribosylarginine; by cholera toxin. Residue Thr189 participates in Mg(2+) binding. The interval Leu204–Lys213 is G3 motif. The G4 motif stretch occupies residues Ile273 to Asp280. The tract at residues Thr344 to Thr349 is G5 motif.

It belongs to the G-alpha family. G(q) subfamily. As to quaternary structure, g proteins are composed of 3 units; alpha, beta and gamma. The alpha chain contains the guanine nucleotide binding site. In terms of tissue distribution, specifically expressed in hematopoietic cells. Expressed in epididymis (at protein level).

In terms of biological role, guanine nucleotide-binding proteins (G proteins) are involved as modulators or transducers in various transmembrane signaling systems. The chain is Guanine nucleotide-binding protein subunit alpha-15 (GNA15) from Homo sapiens (Human).